The sequence spans 553 residues: Transcription factor 7-like 1 (553 aa).

Positions 1–11 (MPQLNSGGGDE) are enriched in gly residues. Residues 1–61 (MPQLNSGGGD…SENHSSDSDS (61 aa)) are interaction with CTNNB1. Disordered stretches follow at residues 1 to 77 (MPQL…EKPR), 183 to 213 (GTPP…PYYP), and 392 to 474 (SARD…LTTK). Basic and acidic residues-rich tracts occupy residues 17–32 (ELIR…EKSP) and 52–77 (SENH…EKPR). The interval 109–312 (LGGHYLPNGA…SPNLITKPSV (204 aa)) is interaction with AES and TLE4. Positions 324–392 (IKKPLNAFML…LHSQLYPTWS (69 aa)) form a DNA-binding region, HMG box. Residues 407–416 (KQSPEMEITK) show a composition bias toward basic and acidic residues. The segment at 408 to 553 (QSPEMEITKT…PLSLVTKSSD (146 aa)) is interaction with CTBP. A compositionally biased stretch (low complexity) spans 444 to 463 (SPATPSAALASPAAPAATHS). Residues 464–473 (EQAQPLSLTT) are compositionally biased toward polar residues.

It belongs to the TCF/LEF family. As to quaternary structure, interacts with csnk1e, ctnnb1, ctbp, dact1 and gsk3b. May interact with ase and tle4. Post-translationally, phosphorylated. Phosphorylation by csnk1e promotes binding to ctnnb1 while phosphorylation by gsk3b may reverse this effect.

The protein resides in the nucleus. Participates in the Wnt signaling pathway. Binds to DNA and acts as a repressor in the absence of ctnnb1, and as an activator in its presence. Required early in development for the establishment of the dorsal body axis in response to maternal Wnt signaling. The chain is Transcription factor 7-like 1 (tcf7l1) from Xenopus tropicalis (Western clawed frog).